An 890-amino-acid polypeptide reads, in one-letter code: Translation initiation factor IF-2 (890 aa).

Positions 50–304 (LRQGSPEQEE…LQQEFERPTA (255 aa)) are disordered. Basic and acidic residues-rich tracts occupy residues 112-125 (KRSD…RKQE), 136-147 (RALEQEEAKREE), and 217-262 (ALKE…QEAK). The tr-type G domain occupies 390–559 (GRAPVVTVMG…VLQAELQELK (170 aa)). Positions 399 to 406 (GHVDHGKT) are G1. Position 399 to 406 (399 to 406 (GHVDHGKT)) interacts with GTP. The interval 424 to 428 (GITQH) is G2. The interval 445–448 (DTPG) is G3. GTP is bound by residues 445–449 (DTPGH) and 499–502 (NKMD). The segment at 499–502 (NKMD) is G4. The segment at 535-537 (SAM) is G5.

This sequence belongs to the TRAFAC class translation factor GTPase superfamily. Classic translation factor GTPase family. IF-2 subfamily.

It is found in the cytoplasm. One of the essential components for the initiation of protein synthesis. Protects formylmethionyl-tRNA from spontaneous hydrolysis and promotes its binding to the 30S ribosomal subunits. Also involved in the hydrolysis of GTP during the formation of the 70S ribosomal complex. This is Translation initiation factor IF-2 from Halorhodospira halophila (strain DSM 244 / SL1) (Ectothiorhodospira halophila (strain DSM 244 / SL1)).